The following is a 561-amino-acid chain: Glutamate--tRNA ligase (561 aa).

The 'HIGH' region motif lies at 107-117 (PNPSGPLHLGH).

This sequence belongs to the class-I aminoacyl-tRNA synthetase family. Glutamate--tRNA ligase type 2 subfamily.

It localises to the cytoplasm. The catalysed reaction is tRNA(Glu) + L-glutamate + ATP = L-glutamyl-tRNA(Glu) + AMP + diphosphate. Catalyzes the attachment of glutamate to tRNA(Glu) in a two-step reaction: glutamate is first activated by ATP to form Glu-AMP and then transferred to the acceptor end of tRNA(Glu). This is Glutamate--tRNA ligase from Methanospirillum hungatei JF-1 (strain ATCC 27890 / DSM 864 / NBRC 100397 / JF-1).